The primary structure comprises 904 residues: Protein translocase subunit SecA (904 aa).

Residues glutamine 87, 105–109, and aspartate 512 each bind ATP; that span reads GEGKT. A disordered region spans residues 851 to 904; it reads LAKQQQLSHESDNSALMSQEEANVAASLERKVGRNDPCPCGSGKKYKQCHGRLQ. Residues 853 to 871 are compositionally biased toward polar residues; the sequence is KQQQLSHESDNSALMSQEE. Zn(2+) is bound by residues cysteine 888, cysteine 890, cysteine 899, and histidine 900. Positions 894-904 are enriched in basic residues; that stretch reads KKYKQCHGRLQ.

Belongs to the SecA family. In terms of assembly, monomer and homodimer. Part of the essential Sec protein translocation apparatus which comprises SecA, SecYEG and auxiliary proteins SecDF-YajC and YidC. It depends on Zn(2+) as a cofactor.

The protein localises to the cell inner membrane. The protein resides in the cytoplasm. It carries out the reaction ATP + H2O + cellular proteinSide 1 = ADP + phosphate + cellular proteinSide 2.. Functionally, part of the Sec protein translocase complex. Interacts with the SecYEG preprotein conducting channel. Has a central role in coupling the hydrolysis of ATP to the transfer of proteins into and across the cell membrane, serving both as a receptor for the preprotein-SecB complex and as an ATP-driven molecular motor driving the stepwise translocation of polypeptide chains across the membrane. The sequence is that of Protein translocase subunit SecA from Yersinia enterocolitica serotype O:8 / biotype 1B (strain NCTC 13174 / 8081).